The chain runs to 268 residues: NADH-quinone oxidoreductase subunit B 2 (268 aa).

4 residues coordinate [4Fe-4S] cluster: Cys-42, Cys-43, Cys-108, and Cys-138. A disordered region spans residues 237 to 268; sequence SPNKAKGVAPEIRHNDLKRPAVEVDHARDEQR. Basic and acidic residues predominate over residues 247–268; the sequence is EIRHNDLKRPAVEVDHARDEQR.

It belongs to the complex I 20 kDa subunit family. NDH-1 is composed of 14 different subunits. Subunits NuoB, C, D, E, F, and G constitute the peripheral sector of the complex. The cofactor is [4Fe-4S] cluster.

It localises to the cell membrane. It catalyses the reaction a quinone + NADH + 5 H(+)(in) = a quinol + NAD(+) + 4 H(+)(out). NDH-1 shuttles electrons from NADH, via FMN and iron-sulfur (Fe-S) centers, to quinones in the respiratory chain. The immediate electron acceptor for the enzyme in this species is believed to be ubiquinone. Couples the redox reaction to proton translocation (for every two electrons transferred, four hydrogen ions are translocated across the cytoplasmic membrane), and thus conserves the redox energy in a proton gradient. This is NADH-quinone oxidoreductase subunit B 2 from Roseiflexus castenholzii (strain DSM 13941 / HLO8).